The sequence spans 726 residues: DNA-directed RNA polymerase subunit beta N-terminal section (726 aa).

Belongs to the RNA polymerase beta chain family. As to quaternary structure, in plastids the minimal PEP RNA polymerase catalytic core is composed of four subunits: alpha, beta, beta', and beta''. When a (nuclear-encoded) sigma factor is associated with the core the holoenzyme is formed, which can initiate transcription.

It localises to the plastid. The protein resides in the chloroplast. It carries out the reaction RNA(n) + a ribonucleoside 5'-triphosphate = RNA(n+1) + diphosphate. Functionally, DNA-dependent RNA polymerase catalyzes the transcription of DNA into RNA using the four ribonucleoside triphosphates as substrates. The sequence is that of DNA-directed RNA polymerase subunit beta N-terminal section (rpoB1) from Tetradesmus obliquus (Green alga).